Consider the following 239-residue polypeptide: LexA repressor (239 aa).

The H-T-H motif DNA-binding region spans 26–46 (FDEMKDALDLASKSGIHRLIT). Residues 80–108 (RRGFSPSVIEGSLGKPQPAAAPAPAKPVA) form a disordered region. Catalysis depends on for autocatalytic cleavage activity residues serine 159 and lysine 197.

Belongs to the peptidase S24 family. As to quaternary structure, homodimer.

It catalyses the reaction Hydrolysis of Ala-|-Gly bond in repressor LexA.. Functionally, represses a number of genes involved in the response to DNA damage (SOS response), including recA and lexA. In the presence of single-stranded DNA, RecA interacts with LexA causing an autocatalytic cleavage which disrupts the DNA-binding part of LexA, leading to derepression of the SOS regulon and eventually DNA repair. This is LexA repressor from Rhizobium leguminosarum bv. trifolii (strain WSM2304).